The primary structure comprises 214 residues: A-type ATP synthase subunit D (214 aa).

The protein belongs to the V-ATPase D subunit family. In terms of assembly, has multiple subunits with at least A(3), B(3), C, D, E, F, H, I and proteolipid K(x).

The protein resides in the cell membrane. In terms of biological role, component of the A-type ATP synthase that produces ATP from ADP in the presence of a proton gradient across the membrane. In Pyrococcus abyssi (strain GE5 / Orsay), this protein is A-type ATP synthase subunit D.